Consider the following 244-residue polypeptide: uncharacterized protein (244 aa).

A run of 2 helical transmembrane segments spans residues 29–49 (WIPW…TQHM) and 139–159 (LGMK…ATVI).

It belongs to the FMP10 family.

The protein resides in the mitochondrion membrane. This is an uncharacterized protein from Saccharomyces cerevisiae (strain ATCC 204508 / S288c) (Baker's yeast).